The primary structure comprises 80 residues: ATP synthase subunit c (80 aa).

2 helical membrane-spanning segments follow: residues 11–31 and 53–73; these read IAAA…IGIL and FFIV…LGLY.

The protein belongs to the ATPase C chain family. As to quaternary structure, F-type ATPases have 2 components, F(1) - the catalytic core - and F(0) - the membrane proton channel. F(1) has five subunits: alpha(3), beta(3), gamma(1), delta(1), epsilon(1). F(0) has three main subunits: a(1), b(2) and c(10-14). The alpha and beta chains form an alternating ring which encloses part of the gamma chain. F(1) is attached to F(0) by a central stalk formed by the gamma and epsilon chains, while a peripheral stalk is formed by the delta and b chains.

The protein localises to the cell inner membrane. Its function is as follows. F(1)F(0) ATP synthase produces ATP from ADP in the presence of a proton or sodium gradient. F-type ATPases consist of two structural domains, F(1) containing the extramembraneous catalytic core and F(0) containing the membrane proton channel, linked together by a central stalk and a peripheral stalk. During catalysis, ATP synthesis in the catalytic domain of F(1) is coupled via a rotary mechanism of the central stalk subunits to proton translocation. Functionally, key component of the F(0) channel; it plays a direct role in translocation across the membrane. A homomeric c-ring of between 10-14 subunits forms the central stalk rotor element with the F(1) delta and epsilon subunits. The protein is ATP synthase subunit c of Aeromonas hydrophila subsp. hydrophila (strain ATCC 7966 / DSM 30187 / BCRC 13018 / CCUG 14551 / JCM 1027 / KCTC 2358 / NCIMB 9240 / NCTC 8049).